We begin with the raw amino-acid sequence, 444 residues long: Probable D-serine dehydratase (444 aa).

N6-(pyridoxal phosphate)lysine is present on Lys-118.

The protein belongs to the serine/threonine dehydratase family. DsdA subfamily. Pyridoxal 5'-phosphate is required as a cofactor.

The catalysed reaction is D-serine = pyruvate + NH4(+). The polypeptide is Probable D-serine dehydratase (Desulfitobacterium hafniense (strain Y51)).